The following is a 166-amino-acid chain: Interferon gamma (166 aa).

The first 23 residues, 1 to 23, serve as a signal peptide directing secretion; that stretch reads MNYTSYILAFQLCVILCSSGYYC. At Gln-24 the chain carries Pyrrolidone carboxylic acid. Asn-39 and Asn-106 each carry an N-linked (GlcNAc...) asparagine glycan.

The protein belongs to the type II (or gamma) interferon family. In terms of assembly, homodimer. Interacts with IFNGR1 (via extracellular domain); this interaction promotes IFNGR1 dimerization. As to expression, released primarily from activated T lymphocytes.

The protein localises to the secreted. Type II interferon produced by immune cells such as T-cells and NK cells that plays crucial roles in antimicrobial, antiviral, and antitumor responses by activating effector immune cells and enhancing antigen presentation. Primarily signals through the JAK-STAT pathway after interaction with its receptor IFNGR1 to affect gene regulation. Upon IFNG binding, IFNGR1 intracellular domain opens out to allow association of downstream signaling components JAK2, JAK1 and STAT1, leading to STAT1 activation, nuclear translocation and transcription of IFNG-regulated genes. Many of the induced genes are transcription factors such as IRF1 that are able to further drive regulation of a next wave of transcription. Plays a role in class I antigen presentation pathway by inducing a replacement of catalytic proteasome subunits with immunoproteasome subunits. In turn, increases the quantity, quality, and repertoire of peptides for class I MHC loading. Increases the efficiency of peptide generation also by inducing the expression of activator PA28 that associates with the proteasome and alters its proteolytic cleavage preference. Up-regulates as well MHC II complexes on the cell surface by promoting expression of several key molecules such as cathepsins B/CTSB, H/CTSH, and L/CTSL. Participates in the regulation of hematopoietic stem cells during development and under homeostatic conditions by affecting their development, quiescence, and differentiation. The polypeptide is Interferon gamma (IFNG) (Ailuropoda melanoleuca (Giant panda)).